A 440-amino-acid polypeptide reads, in one-letter code: Chromosome partition protein MukF (440 aa).

Residues 208–236 (LSETSGTLRELQDTLEAAGDKLQANLLRI) form a leucine-zipper region.

Belongs to the MukF family. Interacts, and probably forms a ternary complex, with MukE and MukB via its C-terminal region. The complex formation is stimulated by calcium or magnesium. It is required for an interaction between MukE and MukB.

The protein localises to the cytoplasm. It localises to the nucleoid. Functionally, involved in chromosome condensation, segregation and cell cycle progression. May participate in facilitating chromosome segregation by condensation DNA from both sides of a centrally located replisome during cell division. Not required for mini-F plasmid partitioning. Probably acts via its interaction with MukB and MukE. Overexpression results in anucleate cells. It has a calcium binding activity. This chain is Chromosome partition protein MukF, found in Escherichia coli O17:K52:H18 (strain UMN026 / ExPEC).